The following is a 335-amino-acid chain: Pregnancy-specific beta-1-glycoprotein 11 (335 aa).

The signal sequence occupies residues 1-34 (MGPLSAPPCTEHIKWKGLLLTALLLNFWNLPTTA). The Ig-like V-type domain occupies 35-144 (QVMIEAQPPK…TGYFTFTLYL (110 aa)). N-linked (GlcNAc...) asparagine glycans are attached at residues N61, N104, and N111. Positions 127-129 (RGD) match the Cell attachment site motif. 2 consecutive Ig-like C2-type domains span residues 147-234 (PKPS…VTLN) and 242-317 (PRIF…TSLT). 2 disulfide bridges follow: C169/C217 and C261/C301.

The protein belongs to the immunoglobulin superfamily. CEA family.

The protein resides in the secreted. The protein is Pregnancy-specific beta-1-glycoprotein 11 (PSG11) of Homo sapiens (Human).